A 543-amino-acid chain; its full sequence is Probable protein kinase UbiB (543 aa).

The Protein kinase domain occupies 123–501; that stretch reads DFDSQALASA…QQRQGQSRYL (379 aa). ATP is bound by residues 129–137 and lysine 152; that span reads LASASIAQV. Aspartate 287 functions as the Proton acceptor in the catalytic mechanism. A helical membrane pass occupies residues 517–539; the sequence is LADATEVSTGFIVAGALAWFIGW.

This sequence belongs to the ABC1 family. UbiB subfamily.

It is found in the cell inner membrane. It functions in the pathway cofactor biosynthesis; ubiquinone biosynthesis [regulation]. Functionally, is probably a protein kinase regulator of UbiI activity which is involved in aerobic coenzyme Q (ubiquinone) biosynthesis. This is Probable protein kinase UbiB from Yersinia pseudotuberculosis serotype O:1b (strain IP 31758).